We begin with the raw amino-acid sequence, 127 residues long: MMRSQSKYTSYFFFLILFYFCIISSFLFLFIFLGRGYLNQQYSTITCLPTFKFSTFLLNTISSPQVVKLDEGFAGVKLVGKENFVCSQIHQFSSYKVYIFRVNTKDFGKVFICRFHGNVFHIESICG.

Residues 12-32 form a helical membrane-spanning segment; that stretch reads FFFLILFYFCIISSFLFLFIF.

Its subcellular location is the membrane. This is an uncharacterized protein from Saccharomyces cerevisiae (strain ATCC 204508 / S288c) (Baker's yeast).